A 275-amino-acid chain; its full sequence is 4-diphosphocytidyl-2-C-methyl-D-erythritol kinase (275 aa).

Lysine 15 is an active-site residue. 97-107 is an ATP binding site; the sequence is PMGSGLGGGSS. Residue aspartate 137 is part of the active site.

This sequence belongs to the GHMP kinase family. IspE subfamily.

The catalysed reaction is 4-CDP-2-C-methyl-D-erythritol + ATP = 4-CDP-2-C-methyl-D-erythritol 2-phosphate + ADP + H(+). The protein operates within isoprenoid biosynthesis; isopentenyl diphosphate biosynthesis via DXP pathway; isopentenyl diphosphate from 1-deoxy-D-xylulose 5-phosphate: step 3/6. Catalyzes the phosphorylation of the position 2 hydroxy group of 4-diphosphocytidyl-2C-methyl-D-erythritol. The chain is 4-diphosphocytidyl-2-C-methyl-D-erythritol kinase from Pseudothermotoga lettingae (strain ATCC BAA-301 / DSM 14385 / NBRC 107922 / TMO) (Thermotoga lettingae).